We begin with the raw amino-acid sequence, 797 residues long: Protocadherin beta-11 (797 aa).

The N-terminal stretch at 1-26 (MENGGTRTQQIRQVLLLFVLLGMSQA) is a signal peptide. Residues 27 to 690 (GSETWSFSVA…AQTDFLTVYL (664 aa)) lie on the Extracellular side of the membrane. Cadherin domains are found at residues 35–133 (VAEE…SPIF), 138–242 (MLLE…SPEF), 247–347 (YEVK…APEI), 352–451 (ITSP…APTF), and 456–561 (YTLF…SPFV). Asn-418, Asn-436, Asn-487, and Asn-567 each carry an N-linked (GlcNAc...) asparagine glycan. The 104-residue stretch at 568-671 (GSAPCTELVP…LVDGFSQPFL (104 aa)) folds into the Cadherin 6 domain. Residues 691–711 (VVALASVSSLFFFSVLLFVAV) form a helical membrane-spanning segment. Residues 712–797 (RLCRRSRAAS…TFQNSFGFNF (86 aa)) are Cytoplasmic-facing.

The protein resides in the cell membrane. Potential calcium-dependent cell-adhesion protein. May be involved in the establishment and maintenance of specific neuronal connections in the brain. The sequence is that of Protocadherin beta-11 (PCDHB11) from Pan troglodytes (Chimpanzee).